The sequence spans 886 residues: Microsomal triacylglycerol transfer protein (886 aa).

Residues Met1 to Thr27 form the signal peptide. Residues Ile30–Ile653 enclose the Vitellogenin domain. Residues Asn358, Asn484, Asn502, and Asn616 are each glycosylated (N-linked (GlcNAc...) asparagine).

The protein localises to the endoplasmic reticulum. It is found in the golgi apparatus. The enzyme catalyses a 1,2-diacyl-sn-glycero-3-phosphocholine(in) = a 1,2-diacyl-sn-glycero-3-phosphocholine(out). It carries out the reaction a 1,2-diacyl-sn-glycero-3-phosphoethanolamine(in) = a 1,2-diacyl-sn-glycero-3-phosphoethanolamine(out). In terms of biological role, catalyzes the transport of phospholipids such as phosphatidylethanolamine (1,2-diacyl-sn-glycero-3-phosphoethanolamine) and phosphatidylcholine (1,2-diacyl-sn-glycero-3-phosphocholine) between membranes. Required for the assembly and secretion of plasma lipoproteins that contain apolipoprotein B. The sequence is that of Microsomal triacylglycerol transfer protein from Drosophila melanogaster (Fruit fly).